The primary structure comprises 426 residues: MSRSKTRQGKLPALGWNTWNAFGCDIDATKIMTAANEVVNLGLKDLGYEYINIDDCWSVKSGRDASTQRIIPDPDKFPDGISGVADQIHDLGLKIGIYSSAGLTTCAGYPASLGYEDIDAQTFAEWGIDYLKYDNCGVPSNWTDTYTYCVPDPGSKATNGTCPDNKNPAPAGYDWRTSLTAERYRRMRDALVSVDRTILYSLCEWGQANVNDWGNETGNSWRTTGDITPSWPRIAAIANENSFLMNHVDFWGYPDPDMLEVGNGNLTLAENRAHFALWAAMKSPLIIGTALDSISQDHLAILSNKILLKFHQDPVIGRPAQPYKWGYNPDWTFDPAHPAEYWSGASSVLGGTLVLMLNSEDTTQRRTAVWKEVPELKDVLGRQGKRRIGFRVTDVWTGKDLGCVRDHYSVELESHDVAALVVGRAC.

The signal sequence occupies residues Met1 to Ala13. Disulfide bonds link Cys24-Cys56 and Cys106-Cys136. The active-site Nucleophile is the Asp134. 2 N-linked (GlcNAc...) asparagine glycosylation sites follow: Asn141 and Asn159. Residue Glu204–Ala208 participates in substrate binding. Asn215 carries an N-linked (GlcNAc...) asparagine glycan. Asp226 serves as the catalytic Proton donor. The N-linked (GlcNAc...) asparagine glycan is linked to Asn265.

Belongs to the glycosyl hydrolase 27 family.

The protein localises to the secreted. It carries out the reaction Hydrolysis of terminal, non-reducing alpha-D-galactose residues in alpha-D-galactosides, including galactose oligosaccharides, galactomannans and galactolipids.. Hydrolyzes a variety of simple alpha-D-galactoside as well as more complex molecules such as oligosaccharides and polysaccharides. This Aspergillus fumigatus (strain CBS 144.89 / FGSC A1163 / CEA10) (Neosartorya fumigata) protein is Probable alpha-galactosidase B (aglB).